The primary structure comprises 282 residues: Mitochondrial outer membrane protein porin (282 aa).

This sequence belongs to the eukaryotic mitochondrial porin family.

It is found in the mitochondrion outer membrane. Forms a channel through the cell membrane that allows diffusion of small hydrophilic molecules. The channel adopts an open conformation at low or zero membrane potential and a closed conformation at potentials above 30-40 mV. The open state has a weak anion selectivity whereas the closed state is cation-selective. The polypeptide is Mitochondrial outer membrane protein porin (POR1) (Candida albicans (strain SC5314 / ATCC MYA-2876) (Yeast)).